The sequence spans 378 residues: Erythronate-4-phosphate dehydrogenase (378 aa).

Positions 45 and 66 each coordinate substrate. NAD(+) is bound by residues Asp-146 and Thr-175. Residue Arg-208 is part of the active site. Asp-232 is an NAD(+) binding site. The active site involves Glu-237. The Proton donor role is filled by His-254. NAD(+) is bound at residue Gly-257. Tyr-258 serves as a coordination point for substrate.

Belongs to the D-isomer specific 2-hydroxyacid dehydrogenase family. PdxB subfamily. As to quaternary structure, homodimer.

It is found in the cytoplasm. The enzyme catalyses 4-phospho-D-erythronate + NAD(+) = (R)-3-hydroxy-2-oxo-4-phosphooxybutanoate + NADH + H(+). Its pathway is cofactor biosynthesis; pyridoxine 5'-phosphate biosynthesis; pyridoxine 5'-phosphate from D-erythrose 4-phosphate: step 2/5. Its function is as follows. Catalyzes the oxidation of erythronate-4-phosphate to 3-hydroxy-2-oxo-4-phosphonooxybutanoate. In Escherichia coli O127:H6 (strain E2348/69 / EPEC), this protein is Erythronate-4-phosphate dehydrogenase.